We begin with the raw amino-acid sequence, 209 residues long: Outer-membrane lipoprotein carrier protein (209 aa).

The first 21 residues, 1–21 (MHRQLRYAVLATALFASTAFA), serve as a signal peptide directing secretion.

This sequence belongs to the LolA family. As to quaternary structure, monomer.

It is found in the periplasm. In terms of biological role, participates in the translocation of lipoproteins from the inner membrane to the outer membrane. Only forms a complex with a lipoprotein if the residue after the N-terminal Cys is not an aspartate (The Asp acts as a targeting signal to indicate that the lipoprotein should stay in the inner membrane). The polypeptide is Outer-membrane lipoprotein carrier protein (Xanthomonas axonopodis pv. citri (strain 306)).